The primary structure comprises 278 residues: MASIDGLPPLREVIRAHGLSAKRQLGQNFLLDLNLTAKIARLAGDLTNSDVLEVGPGPGGLTRGLLAEGARRVLAIEKDARCLPALAEVAAAWPGRLEVLNADALEVDVAARLTPPIRIVANLPYNVGTELLTRWLSSDWPPFWESLTLMFQKEVAERIVAKPGSKAYGRLALLSQWRTDPKIVLTLPPDAFTPPPSIHSAVVHFTRLEAPRHPADPKVLARVTAMAFNQRRKMLRSSLKGLVPDIETVLREAGIEPTQRAEEIPLEGFCALARRLAG.

The S-adenosyl-L-methionine site is built by asparagine 28, leucine 30, glycine 55, glutamate 77, aspartate 103, and asparagine 122.

This sequence belongs to the class I-like SAM-binding methyltransferase superfamily. rRNA adenine N(6)-methyltransferase family. RsmA subfamily.

The protein localises to the cytoplasm. The enzyme catalyses adenosine(1518)/adenosine(1519) in 16S rRNA + 4 S-adenosyl-L-methionine = N(6)-dimethyladenosine(1518)/N(6)-dimethyladenosine(1519) in 16S rRNA + 4 S-adenosyl-L-homocysteine + 4 H(+). In terms of biological role, specifically dimethylates two adjacent adenosines (A1518 and A1519) in the loop of a conserved hairpin near the 3'-end of 16S rRNA in the 30S particle. May play a critical role in biogenesis of 30S subunits. In Cereibacter sphaeroides (strain ATCC 17029 / ATH 2.4.9) (Rhodobacter sphaeroides), this protein is Ribosomal RNA small subunit methyltransferase A.